Reading from the N-terminus, the 295-residue chain is Indole-3-glycerol phosphate synthase (295 aa).

Belongs to the TrpC family.

It carries out the reaction 1-(2-carboxyphenylamino)-1-deoxy-D-ribulose 5-phosphate + H(+) = (1S,2R)-1-C-(indol-3-yl)glycerol 3-phosphate + CO2 + H2O. Its pathway is amino-acid biosynthesis; L-tryptophan biosynthesis; L-tryptophan from chorismate: step 4/5. The chain is Indole-3-glycerol phosphate synthase from Prochlorococcus marinus (strain AS9601).